Here is a 192-residue protein sequence, read N- to C-terminus: MATTNCLLALAIAGLVLVSLPGLSRGDVDARRGRELAGGCNPSGTLRPSRSHSCQDCCKAGRSYPTYACSPATTGSTKAVMTLNDFEAGGDGGDPSECDGKFHKNTERVVALSTGWYANGRRCNKNIRINANGRSVLAKVVDECDSLHGCDKEHAYQPPCRPNVVDASQAVWDALRITGEDVGEYDITWSDA.

The N-terminal stretch at 1-26 is a signal peptide; sequence MATTNCLLALAIAGLVLVSLPGLSRG.

This sequence belongs to the kiwellin family.

The protein resides in the secreted. The chain is Putative ripening-related protein 2 from Oryza sativa subsp. japonica (Rice).